Consider the following 461-residue polypeptide: Putative dipeptidase CPSG_01350 (461 aa).

Residues 1 to 10 (MSARDNEKGS) are compositionally biased toward basic and acidic residues. A disordered region spans residues 1–31 (MSARDNEKGSARSQPSHAAASEIENVPRPSR). The helical transmembrane segment at 35–52 (WTGTMIKVFIICACAGIV) threads the bilayer. H90, D92, and E203 together coordinate Zn(2+). A disulfide bridge links C142 with C232. Residue H230 participates in substrate binding. Positions 274 and 295 each coordinate Zn(2+). Residues R306 and D366 each contribute to the substrate site. Residue N379 is glycosylated (N-linked (GlcNAc...) asparagine).

It belongs to the metallo-dependent hydrolases superfamily. Peptidase M19 family. Requires Zn(2+) as cofactor.

It localises to the membrane. It catalyses the reaction an L-aminoacyl-L-amino acid + H2O = 2 an L-alpha-amino acid. Functionally, hydrolyzes a wide range of dipeptides. The chain is Putative dipeptidase CPSG_01350 from Coccidioides posadasii (strain RMSCC 757 / Silveira) (Valley fever fungus).